The sequence spans 419 residues: ADIPOR-like receptor IZH3 (419 aa).

Residues Met-1–Leu-65 form a disordered region. The Lumenal portion of the chain corresponds to Met-1–Thr-147. Asn-145 carries N-linked (GlcNAc...) asparagine glycosylation. Residues Ile-148–Trp-168 traverse the membrane as a helical segment. Residues Pro-169 to Lys-184 lie on the Cytoplasmic side of the membrane. Residues Trp-185–His-205 traverse the membrane as a helical segment. Over Thr-206–Thr-225 the chain is Lumenal. N-linked (GlcNAc...) asparagine glycosylation occurs at Asn-208. The helical transmembrane segment at Gly-226 to Leu-246 threads the bilayer. The Cytoplasmic portion of the chain corresponds to Ser-247–Pro-249. The helical transmembrane segment at Leu-250–Trp-270 threads the bilayer. Residues Ser-271–Arg-283 are Lumenal-facing. A helical transmembrane segment spans residues Ile-284–Gln-304. Over Val-305–His-311 the chain is Cytoplasmic. The helical transmembrane segment at Leu-312–Ala-332 threads the bilayer. Residues Thr-333 to Trp-377 lie on the Lumenal side of the membrane. Residues Trp-378–Val-398 traverse the membrane as a helical segment. At Gly-399–Phe-419 the chain is on the cytoplasmic side.

This sequence belongs to the ADIPOR family.

It is found in the endoplasmic reticulum membrane. In terms of biological role, ADIPOR-like receptor involved in zinc metabolism either by altering membrane sterol content or by directly altering cellular zinc levels. This is ADIPOR-like receptor IZH3 (IZH3) from Eremothecium gossypii (strain ATCC 10895 / CBS 109.51 / FGSC 9923 / NRRL Y-1056) (Yeast).